A 146-amino-acid chain; its full sequence is Large ribosomal subunit protein uL15 (146 aa).

Residues 1–59 are disordered; that stretch reads MRLEELKAPAGANKRTKRVGRGTGSGHGKTSTRGHKGQKSRSGGGVRPGFEGGQMPLQR. Over residues 30 to 39 the composition is skewed to basic residues; the sequence is TSTRGHKGQK. Gly residues predominate over residues 42 to 52; that stretch reads SGGGVRPGFEG.

It belongs to the universal ribosomal protein uL15 family. As to quaternary structure, part of the 50S ribosomal subunit.

In terms of biological role, binds to the 23S rRNA. This is Large ribosomal subunit protein uL15 from Syntrophomonas wolfei subsp. wolfei (strain DSM 2245B / Goettingen).